We begin with the raw amino-acid sequence, 93 residues long: UPF0223 protein str0998 (93 aa).

It belongs to the UPF0223 family.

The sequence is that of UPF0223 protein str0998 from Streptococcus thermophilus (strain CNRZ 1066).